The chain runs to 117 residues: NADH-ubiquinone oxidoreductase chain 3 (117 aa).

3 consecutive transmembrane segments (helical) span residues 1-21, 58-78, and 86-106; these read MLML…VMML, FLIA…LPMI, and LMNW…GLYH.

Belongs to the complex I subunit 3 family.

It localises to the mitochondrion membrane. The enzyme catalyses a ubiquinone + NADH + 5 H(+)(in) = a ubiquinol + NAD(+) + 4 H(+)(out). Functionally, core subunit of the mitochondrial membrane respiratory chain NADH dehydrogenase (Complex I) that is believed to belong to the minimal assembly required for catalysis. Complex I functions in the transfer of electrons from NADH to the respiratory chain. The immediate electron acceptor for the enzyme is believed to be ubiquinone. This is NADH-ubiquinone oxidoreductase chain 3 (mt:ND3) from Anopheles gambiae (African malaria mosquito).